Reading from the N-terminus, the 337-residue chain is GTPase Obg (337 aa).

An Obg domain is found at 1 to 159; the sequence is MQFIDYVKIY…RWVILELKLL (159 aa). An OBG-type G domain is found at 160–331; sequence ADVGLIGLPN…LLHYLSEKVG (172 aa). Residues 166-173, 191-195, 213-216, 283-286, and 312-314 contribute to the GTP site; these read GLPNAGKS, FTTLI, DIPG, TKID, and SAV. Positions 173 and 193 each coordinate Mg(2+).

The protein belongs to the TRAFAC class OBG-HflX-like GTPase superfamily. OBG GTPase family. As to quaternary structure, monomer. Mg(2+) serves as cofactor.

The protein resides in the cytoplasm. Functionally, an essential GTPase which binds GTP, GDP and possibly (p)ppGpp with moderate affinity, with high nucleotide exchange rates and a fairly low GTP hydrolysis rate. Plays a role in control of the cell cycle, stress response, ribosome biogenesis and in those bacteria that undergo differentiation, in morphogenesis control. The sequence is that of GTPase Obg from Thermodesulfovibrio yellowstonii (strain ATCC 51303 / DSM 11347 / YP87).